Consider the following 852-residue polypeptide: Beta-galactosidase 8 (852 aa).

Positions 1 to 29 (MEIAAKMVKVRKMEMILLLILVIVVAATA) are cleaved as a signal peptide. Asn31 is a glycosylation site (N-linked (GlcNAc...) asparagine). Residue Glu188 is the Proton donor of the active site. Glu257 functions as the Nucleophile in the catalytic mechanism. N-linked (GlcNAc...) asparagine glycosylation is found at Asn258, Asn475, Asn766, and Asn807. An SUEL-type lectin domain is found at 766–852 (NRTRPVLSLK…KSLAVEASCS (87 aa)).

Belongs to the glycosyl hydrolase 35 family. Expressed in roots, flowers and siliques.

Its subcellular location is the secreted. The protein localises to the extracellular space. The protein resides in the apoplast. It catalyses the reaction Hydrolysis of terminal non-reducing beta-D-galactose residues in beta-D-galactosides.. The sequence is that of Beta-galactosidase 8 (BGAL8) from Arabidopsis thaliana (Mouse-ear cress).